Reading from the N-terminus, the 697-residue chain is Heat shock protein homolog SSE1 (697 aa).

The segment covering 664-674 has biased composition (low complexity); that stretch reads EMAEKLAAQRA. Residues 664–697 are disordered; sequence EMAEKLAAQRAAEQKAQESKAESDKDAEGDIDLD. The segment covering 675 to 691 has biased composition (basic and acidic residues); that stretch reads AEQKAQESKAESDKDAE.

Belongs to the heat shock protein 70 family.

Its subcellular location is the cytoplasm. The sequence is that of Heat shock protein homolog SSE1 (SSE1) from Eremothecium gossypii (strain ATCC 10895 / CBS 109.51 / FGSC 9923 / NRRL Y-1056) (Yeast).